A 208-amino-acid chain; its full sequence is Ypt/Rab-type GTPase YPT7 (208 aa).

GTP is bound by residues S17–S23, Y33–T40, G67, and N126–D129. An Effector region motif is present at residues Y37–F45. K147 is covalently cross-linked (Glycyl lysine isopeptide (Lys-Gly) (interchain with G-Cter in ubiquitin)). S158–K160 serves as a coordination point for GTP. S-geranylgeranyl cysteine attachment occurs at residues C206 and C208. Cysteine methyl ester is present on C208.

This sequence belongs to the small GTPase superfamily. Rab family. In terms of assembly, interacts with IVY1. Interacts with YIF1, YIP4 and YIP5. Interacts with the HOPS complex. Interacts with the class C-Vps complex. Interacts with VPS35. Interacts with VPS39. Interacts with the GDP dissociation inhibitor GDI1. Interacts with CCZ1.

Its subcellular location is the late endosome. The protein resides in the vacuole membrane. Rab activation is generally mediated by a guanine exchange factor (GEF), while inactivation through hydrolysis of bound GTP is catalyzed by a GTPase activating protein (GAP). YPT7 is activated by GEFs MON1-CCZ1 complex (MC1) and VAM6/VPS39, and inactivated by GAPs GYP7 and GYP1. In terms of biological role, ypt/Rab-type GTPases are key regulators of membrane trafficking and intracellular vesicular transport. They act as molecular switches that convert between GTP-bound and GDP-bound states, and regulate virtually all steps of membrane traffic from the formation of the transport vesicle at the donor membrane to its fusion at the target membrane. In the GDP-bound state, Ypt proteins are predominantly cytosolic, solubilized through the interaction with a GDP dissociation inhibitor (GDI). In the GTP-bound state, the proteins are membrane bound and interact with specific effector proteins that select cargo, promote vesicle movement, or verify the correct site of fusion. Involved in regulation of vesicular protein transport in exo- and endocytosis. Involved in regulation of late endosome to vacuole trafficking and homotypic vacuole fusion, by interacting in its GTP-bound state on the donor membrane with the large multiprotein HOPS/class C-Vps tethering complex on the acceptor membrane. Involved in retromer assembly and cargo export, recognizing the cargo selection complex (CSC). GTP-bound YPT7 recruits CSC to vacuolar membranes via retromer subunit VPS35. Interacts with the HOPS complex subunit VPS39 independent of the HOPS complex at mitochondria-vacuole contact sites (vCLAMPs), providing a physical and metabolic interconnection between the endocytic pathway and mitochondria. The chain is Ypt/Rab-type GTPase YPT7 (YPT7) from Saccharomyces cerevisiae (strain ATCC 204508 / S288c) (Baker's yeast).